Here is a 1056-residue protein sequence, read N- to C-terminus: E3 SUMO-protein ligase ZNF451 (1056 aa).

The interval 1–39 is disordered; the sequence is MGDPGPEIIESVPPAGPEASESTTDENEDDIQFVSEGPL. The sufficient for E3 SUMO-protein ligase activity stretch occupies residues 1–246; sequence MGDPGPEIIE…AADGHSNSLL (246 aa). The tract at residues 1 to 344 is important for interaction with SUMO1 and SUMO2; sequence MGDPGPEIIE…RVRCQNAGPV (344 aa). The segment at 30 to 37 is interaction with SUMO2 1; that stretch reads DIQFVSEG. The PLRP motif lies at 38–41; it reads PLRP. Positions 42–50 are interaction with SUMO2 2; that stretch reads VLEYIDLVS. Residues Lys75, Lys77, Lys106, Lys139, and Lys153 each participate in a glycyl lysine isopeptide (Lys-Gly) (interchain with G-Cter in SUMO2) cross-link. A Phosphoserine modification is found at Ser155. Arg158 bears the Omega-N-methylarginine mark. A Glycyl lysine isopeptide (Lys-Gly) (interchain with G-Cter in SUMO2) cross-link involves residue Lys167. The tract at residues 168–521 is important for interaction with SMAD4; it reads PILCPIMHCN…HMSRFHGGAH (354 aa). Residues 169–195 form a C2H2-type 1 zinc finger; it reads ILCPIMHCNKEFDNGHLLLGHLKRFDH. The C2H2-type 2; degenerate zinc finger occupies 212–234; it reads FACAVCYEHFVTQQQYKDHLLSR. The C2H2-type 3 zinc finger occupies 253 to 277; it reads YACPQCFLLFSTKDECLKHMSTKNH. Residues Lys270, Lys275, Lys283, Lys288, Lys301, and Lys309 each participate in a glycyl lysine isopeptide (Lys-Gly) (interchain with G-Cter in SUMO2) cross-link. A C2H2-type 4; atypical zinc finger spans residues 315 to 338; that stretch reads VKCVACHQTLRSHMELTAHFRVRC. Residues 362 to 385 form a C2H2-type 5 zinc finger; the sequence is GYCSDCNQVFMDVASTQSHKNSGH. Lys420 participates in a covalent cross-link: Glycyl lysine isopeptide (Lys-Gly) (interchain with G-Cter in SUMO2). At Ser429 the chain carries Phosphoserine. Lys431 is covalently cross-linked (Glycyl lysine isopeptide (Lys-Gly) (interchain with G-Cter in SUMO2)). C2H2-type zinc fingers lie at residues 494-517 and 527-550; these read YKCVVCGKVCEDSGVMRLHMSRFH and FWCRTCKKELVKKDAIMAHITEFH. Glycyl lysine isopeptide (Lys-Gly) (interchain with G-Cter in SUMO2) cross-links involve residues Lys539 and Lys583. A C2H2-type 8; atypical zinc finger spans residues 604–629; that stretch reads WQCRICEDMFESQECVKQHCMSLTSH. C2H2-type zinc fingers lie at residues 634–657 and 665–688; these read YSCAHCRKTFHKVETLYRHCQDEH and YFCGLCDLIFNKEEEFLSHYKEHH. Lys645 participates in a covalent cross-link: Glycyl lysine isopeptide (Lys-Gly) (interchain with G-Cter in SUMO2). Lys704 participates in a covalent cross-link: Glycyl lysine isopeptide (Lys-Gly) (interchain with G-Cter in SUMO1); alternate. Residue Lys704 forms a Glycyl lysine isopeptide (Lys-Gly) (interchain with G-Cter in SUMO2); alternate linkage. Glycyl lysine isopeptide (Lys-Gly) (interchain with G-Cter in SUMO2) cross-links involve residues Lys729 and Lys746. 2 consecutive C2H2-type zinc fingers follow at residues 751 to 774 and 787 to 810; these read FRCSSCSATAQNVTDINTHVCQVH and IKCGICTKAFQNTESAQQHFHRKH. Residues Lys788, Lys815, Lys843, Lys849, Lys947, Lys988, and Lys989 each participate in a glycyl lysine isopeptide (Lys-Gly) (interchain with G-Cter in SUMO2) cross-link. Disordered stretches follow at residues 806–830 and 839–858; these read FHRKHAALQKPTATPGGANRSSTCQ and EKNLKQPSSQKHSDVEKGAE. Positions 849 to 858 are enriched in basic and acidic residues; the sequence is KHSDVEKGAE. Residues 1019 to 1045 form a disordered region; it reads KECDSDDSSGMKGSPAEELRATEDVEL. Positions 1033–1045 are enriched in basic and acidic residues; sequence PAEELRATEDVEL. The tract at residues 1045–1056 is important for ubiquitin binding; the sequence is LEEAIRRSLEEM.

Belongs to the krueppel C2H2-type zinc-finger protein family. Homooligomer. Interacts (via N-terminal region) with SUMO1. Interacts (via N-terminal region) with SUMO2. Interacts simultaneously with two SUMO2 chains. Identified in a complex with SUMO2 and UBE2I/UBC9, where one ZNF451 interacts with one UBE2I/UBC9 and two SUMO2 chains, one bound to the UBE2I/UBC9 active site and the other to another region of the same UBE2I/UBC9 molecule. Interacts (via C-terminus) with ubiquitin. Interacts (via N-terminal zinc-finger domains) with SMAD4 (via MH2 domain). Interacts with SMAD2 and SMAD3. Identified in a complex that contains at least ZNF451, SMAD2, SMAD3 and SMAD4. Interacts with EP300. Inhibits interaction between EP300 and the SMAD4 complex. Interacts with SIMC1. Sumoylated. Predominantly sumoylated on the N-terminal region that is important for interaction with SUMO1 and SUMO2. Sumoylation is important for localization in nuclear granules; desumoylation leads to diffuse nucleoplasmic location. Autosumoylated (in vitro). Sumoylation enhances E3 SUMO-protein ligase activity.

The protein resides in the nucleus. It is found in the PML body. Its subcellular location is the nucleoplasm. Its pathway is protein modification; protein sumoylation. In terms of biological role, E3 SUMO-protein ligase; has a preference for SUMO2 and SUMO3 and facilitates UBE2I/UBC9-mediated sumoylation of target proteins. Plays a role in protein SUMO2 modification in response to stress caused by DNA damage and by proteasome inhibitors (in vitro). Required for MCM4 sumoylation. Has no activity with SUMO1. Preferentially transfers an additional SUMO2 chain onto the SUMO2 consensus site 'Lys-11'. Negatively regulates transcriptional activation mediated by the SMAD4 complex in response to TGF-beta signaling. Inhibits EP300-mediated acetylation of histone H3 at 'Lys-9'. Plays a role in regulating the transcription of AR targets. This chain is E3 SUMO-protein ligase ZNF451 (Znf451), found in Mus musculus (Mouse).